A 563-amino-acid polypeptide reads, in one-letter code: Developmental regulatory protein wetA (563 aa).

2 stretches are compositionally biased toward polar residues: residues 54 to 69 and 160 to 175; these read EQSP…THPS and HKQS…SQFQ. Disordered regions lie at residues 54-81, 112-176, 272-318, 334-356, 430-494, and 516-538; these read EQSP…SLPP, ASST…QFQK, SNNS…PDLQ, PQRQ…IQNT, PQLH…SPKG, and GVAP…DRRR. The span at 272 to 305 shows a compositional bias: low complexity; it reads SNNSTVTSSPPSADDIFPSPHSSDPQSMSSWHSD. Residues 430–441 are compositionally biased toward polar residues; the sequence is PQLHPQSRSPSL.

Belongs to the wetA family.

BrlA, abaA and wetA are pivotal regulators of conidiophore development and conidium maturation. They act individually and together to regulate their own expression and that of numerous other sporulation-specific genes. The polypeptide is Developmental regulatory protein wetA (Aspergillus oryzae (strain ATCC 42149 / RIB 40) (Yellow koji mold)).